Reading from the N-terminus, the 221-residue chain is Iron-sulfur cluster repair protein YtfE (221 aa).

The protein belongs to the RIC family. YtfE subfamily. As to quaternary structure, homodimer.

Its subcellular location is the cytoplasm. Di-iron-containing protein involved in the repair of iron-sulfur clusters damaged by oxidative and nitrosative stress conditions. The chain is Iron-sulfur cluster repair protein YtfE from Pectobacterium carotovorum subsp. carotovorum (strain PC1).